The sequence spans 318 residues: Formimidoylglutamase (318 aa).

Mn(2+) is bound by residues histidine 124, aspartate 153, histidine 155, aspartate 157, cysteine 241, and aspartate 243.

Belongs to the arginase family. The cofactor is Mn(2+).

The catalysed reaction is N-formimidoyl-L-glutamate + H2O = formamide + L-glutamate. It participates in amino-acid degradation; L-histidine degradation into L-glutamate; L-glutamate from N-formimidoyl-L-glutamate (hydrolase route): step 1/1. Catalyzes the conversion of N-formimidoyl-L-glutamate to L-glutamate and formamide. In Fusobacterium nucleatum subsp. nucleatum (strain ATCC 25586 / DSM 15643 / BCRC 10681 / CIP 101130 / JCM 8532 / KCTC 2640 / LMG 13131 / VPI 4355), this protein is Formimidoylglutamase.